The following is a 458-amino-acid chain: Monomethylamine methyltransferase MtmB3 (458 aa).

A non-standard amino acid (pyrrolysine) is located at residue Pyl-202.

Belongs to the monomethylamine methyltransferase family.

The catalysed reaction is Co(I)-[methylamine-specific corrinoid protein] + methylamine + H(+) = methyl-Co(III)-[methylamine-specific corrinoid protein] + NH4(+). It participates in one-carbon metabolism; methanogenesis from methylamine. Catalyzes the transfer of the methyl group from monomethylamine to the corrinoid cofactor of MtmC. The protein is Monomethylamine methyltransferase MtmB3 (mtmB3) of Methanosarcina barkeri (strain Fusaro / DSM 804).